A 257-amino-acid polypeptide reads, in one-letter code: NAD kinase (257 aa).

Catalysis depends on aspartate 46, which acts as the Proton acceptor. NAD(+) is bound by residues 46–47, 116–117, aspartate 146, alanine 154, 157–162, and asparagine 218; these read DG, NE, and TAYNLS.

This sequence belongs to the NAD kinase family. It depends on a divalent metal cation as a cofactor.

It is found in the cytoplasm. The enzyme catalyses NAD(+) + ATP = ADP + NADP(+) + H(+). Involved in the regulation of the intracellular balance of NAD and NADP, and is a key enzyme in the biosynthesis of NADP. Catalyzes specifically the phosphorylation on 2'-hydroxyl of the adenosine moiety of NAD to yield NADP. This chain is NAD kinase, found in Brucella suis biovar 1 (strain 1330).